The following is a 296-amino-acid chain: Probable endonuclease 4 (296 aa).

Zn(2+) is bound by residues H68, H109, E144, D178, H181, H213, D226, H228, and E258.

This sequence belongs to the AP endonuclease 2 family. Requires Zn(2+) as cofactor.

It carries out the reaction Endonucleolytic cleavage to 5'-phosphooligonucleotide end-products.. Its function is as follows. Endonuclease IV plays a role in DNA repair. It cleaves phosphodiester bonds at apurinic or apyrimidinic (AP) sites, generating a 3'-hydroxyl group and a 5'-terminal sugar phosphate. In Staphylococcus aureus (strain MRSA252), this protein is Probable endonuclease 4.